Here is a 58-residue protein sequence, read N- to C-terminus: Protein SHMOOSE (58 aa).

Positions 27-58 (FGATPNKSNNHAHYYNHPNPDFPNSPHPYHPR) are disordered. Residues 35-45 (NNHAHYYNHPN) are compositionally biased toward low complexity. The span at 46 to 58 (PDFPNSPHPYHPR) shows a compositional bias: pro residues.

Interacts with IMMT/mitofilin. In terms of tissue distribution, detected in cerebrospinal fluid (at protein level).

The protein localises to the mitochondrion. It is found in the nucleus. Functionally, increases neural cell metabolic activity and mitochondrial oxygen consumption rate. The sequence is that of Protein SHMOOSE from Homo sapiens (Human).